Here is a 172-residue protein sequence, read N- to C-terminus: MASGFKKPSAASTGQKRKVAPKPELTEDQKQEVREAFDLFDVDGSGTIDAKELKVAMRALGFEPRKEEMKKMISEVDREGTGKISFNDFLAVMTQKMSEKDTKEEILKAFRLFDDDETGKISFKNLKRVANELGENLTDEELQEMIDEADRDGDGEVNEEEFLRIMKKTSLY.

Positions 1–31 (MASGFKKPSAASTGQKRKVAPKPELTEDQKQ) are disordered. EF-hand domains follow at residues 28 to 63 (DQKQ…LGFE), 64 to 99 (PRKE…KMSE), 101 to 136 (DTKE…LGEN), and 137 to 172 (LTDE…TSLY). Ca(2+) is bound by residues aspartate 41, aspartate 43, serine 45, threonine 47, and glutamate 52. Aspartate 150, aspartate 152, aspartate 154, glutamate 156, and glutamate 161 together coordinate Ca(2+).

It belongs to the centrin family. In terms of assembly, monomer. Interacts with CIMAP3. Interacts with USP49.

The protein resides in the cytoplasm. The protein localises to the cytoskeleton. It is found in the microtubule organizing center. It localises to the centrosome. Its subcellular location is the cell projection. The protein resides in the cilium. Functionally, plays a fundamental role in microtubule-organizing center structure and function. Plays a role in sperm cilia formation. The sequence is that of Centrin-1 from Homo sapiens (Human).